A 177-amino-acid chain; its full sequence is Probable inosine/xanthosine triphosphatase (177 aa).

Belongs to the YjjX NTPase family. As to quaternary structure, homodimer. It depends on Mg(2+) as a cofactor. The cofactor is Mn(2+).

The catalysed reaction is XTP + H2O = XDP + phosphate + H(+). The enzyme catalyses ITP + H2O = IDP + phosphate + H(+). Functionally, phosphatase that hydrolyzes non-canonical purine nucleotides such as XTP and ITP to their respective diphosphate derivatives. Probably excludes non-canonical purines from DNA/RNA precursor pool, thus preventing their incorporation into DNA/RNA and avoiding chromosomal lesions. The polypeptide is Probable inosine/xanthosine triphosphatase (Pyrobaculum arsenaticum (strain DSM 13514 / JCM 11321 / PZ6)).